Here is a 370-residue protein sequence, read N- to C-terminus: GTPase Obg (370 aa).

Positions 1–159 (MKFIDEARIE…RMLKLELKVL (159 aa)) constitute an Obg domain. Residues 128–147 (LHFKSSTNRAPRQKTDGKPG) are disordered. An OBG-type G domain is found at 160–334 (ADVGLLGMPN…LCYAIYDYLS (175 aa)). Residues 166-173 (GMPNAGKS), 191-195 (FTTLA), 213-216 (DIPG), 284-287 (NKLD), and 315-317 (SAL) each bind GTP. Mg(2+)-binding residues include Ser173 and Thr193.

It belongs to the TRAFAC class OBG-HflX-like GTPase superfamily. OBG GTPase family. As to quaternary structure, monomer. The cofactor is Mg(2+).

The protein resides in the cytoplasm. Functionally, an essential GTPase which binds GTP, GDP and possibly (p)ppGpp with moderate affinity, with high nucleotide exchange rates and a fairly low GTP hydrolysis rate. Plays a role in control of the cell cycle, stress response, ribosome biogenesis and in those bacteria that undergo differentiation, in morphogenesis control. The protein is GTPase Obg of Burkholderia orbicola (strain MC0-3).